The primary structure comprises 340 residues: N-acetyl-gamma-glutamyl-phosphate reductase (340 aa).

Cys-146 is an active-site residue.

Belongs to the NAGSA dehydrogenase family. Type 1 subfamily.

The protein localises to the cytoplasm. It catalyses the reaction N-acetyl-L-glutamate 5-semialdehyde + phosphate + NADP(+) = N-acetyl-L-glutamyl 5-phosphate + NADPH + H(+). Its pathway is amino-acid biosynthesis; L-arginine biosynthesis; N(2)-acetyl-L-ornithine from L-glutamate: step 3/4. Catalyzes the NADPH-dependent reduction of N-acetyl-5-glutamyl phosphate to yield N-acetyl-L-glutamate 5-semialdehyde. The protein is N-acetyl-gamma-glutamyl-phosphate reductase of Streptococcus thermophilus (strain CNRZ 1066).